The primary structure comprises 229 residues: tRNA pseudouridine synthase B (229 aa).

Aspartate 42 acts as the Nucleophile in catalysis.

It belongs to the pseudouridine synthase TruB family. Type 1 subfamily.

It carries out the reaction uridine(55) in tRNA = pseudouridine(55) in tRNA. Its function is as follows. Responsible for synthesis of pseudouridine from uracil-55 in the psi GC loop of transfer RNAs. In Ureaplasma urealyticum serovar 10 (strain ATCC 33699 / Western), this protein is tRNA pseudouridine synthase B.